The primary structure comprises 410 residues: MTSPIHVMSEIGKLKTVMLKRPNVEVENFTPDMMERLLFDDIPYLPIAQQEHDNFAETLRQNGTEVLYLEQLSAEALDDGGEEVKLNFLEQMLAESGYVAGVTHDALKEYLLSLDTQAMVNKIMGGVRKNELDFVPADLVSAAEEDDYPFFMDPMPNLYFTRDPAASIGDGLSINHMTFAARQRESLFMETIIKYHHRFANKGLNVWRDRNHDTRIEGGDELVLSDHVLAIGVSQRTSADAIEDIARNLFAKSHFDKVIAIKIPHNHAMMHLDTVFTMINTDQFTVHPGILGEGGHIDTWTITPGKDGQLSLDHQTDLKKVLKDALNLDDLDLIPTGNGDPIIAGREQWNDGSNTLAIAPGVVVTYNRNYVSNELLRKHGLKVIDVLSSELSRGRGGPRCMSMPLVREDL.

Cys-400 serves as the catalytic Amidino-cysteine intermediate.

Belongs to the arginine deiminase family.

It is found in the cytoplasm. The enzyme catalyses L-arginine + H2O = L-citrulline + NH4(+). It participates in amino-acid degradation; L-arginine degradation via ADI pathway; carbamoyl phosphate from L-arginine: step 1/2. The protein is Arginine deiminase of Levilactobacillus brevis (strain ATCC 367 / BCRC 12310 / CIP 105137 / JCM 1170 / LMG 11437 / NCIMB 947 / NCTC 947) (Lactobacillus brevis).